We begin with the raw amino-acid sequence, 139 residues long: UPF0225 protein Bpro_4182 (139 aa).

Belongs to the UPF0225 family.

This Polaromonas sp. (strain JS666 / ATCC BAA-500) protein is UPF0225 protein Bpro_4182.